The following is a 453-amino-acid chain: Phosphoglucosamine mutase (453 aa).

Catalysis depends on Ser100, which acts as the Phosphoserine intermediate. Mg(2+) contacts are provided by Ser100, Asp239, Asp241, and Asp243. At Ser100 the chain carries Phosphoserine.

Belongs to the phosphohexose mutase family. Requires Mg(2+) as cofactor. Post-translationally, activated by phosphorylation.

It catalyses the reaction alpha-D-glucosamine 1-phosphate = D-glucosamine 6-phosphate. In terms of biological role, catalyzes the conversion of glucosamine-6-phosphate to glucosamine-1-phosphate. This chain is Phosphoglucosamine mutase, found in Buchnera aphidicola subsp. Baizongia pistaciae (strain Bp).